The following is a 1064-amino-acid chain: Lethal(2) giant larvae protein homolog 1 (1064 aa).

14 WD repeats span residues Ser-38 to Leu-71, Val-78 to Phe-119, Val-139 to Leu-176, Ser-200 to Phe-234, Leu-240 to Pro-272, Ala-290 to Val-332, Ile-340 to Leu-374, Thr-396 to Ser-474, Gln-518 to Val-593, Thr-602 to Ser-663, Val-723 to Gln-783, Ala-792 to Lys-844, Leu-849 to Ser-902, and Val-916 to Ala-939. The residue at position 663 (Ser-663) is a Phosphoserine. Thr-958 is subject to Phosphothreonine. The segment at Glu-966 to Pro-1010 is disordered. 2 positions are modified to phosphoserine: Ser-967 and Ser-985.

The protein belongs to the WD repeat L(2)GL family. Associated with nonmuscle myosin II heavy chain. Interacts with PRKCI/aPKC, PARD6B/Par-6 and PARD6A. Interacts with STX4A. Interacts with RAB10 (GDP-bound form); the interaction is direct and promotes RAB10 association with membranes and activation through competition with the Rab inhibitor GDI1. Interacts with DCAF1. Phosphorylated at least at Ser-663 by PRKCI. Expressed in brain, kidney, and muscle but is barely seen in heart and placenta. Down-regulated or lost in all cell lines and in most of the tumor samples analyzed. Loss was associated with advanced stage of the disease.

The protein localises to the early endosome membrane. It localises to the golgi apparatus. Its subcellular location is the trans-Golgi network membrane. It is found in the golgi apparatus membrane. The protein resides in the cell projection. The protein localises to the axon. It localises to the cytoplasm. Its subcellular location is the cytoskeleton. Cortical cytoskeleton protein found in a complex involved in maintaining cell polarity and epithelial integrity. Involved in the regulation of mitotic spindle orientation, proliferation, differentiation and tissue organization of neuroepithelial cells. Involved in axonogenesis through RAB10 activation thereby regulating vesicular membrane trafficking toward the axonal plasma membrane. This is Lethal(2) giant larvae protein homolog 1 (LLGL1) from Homo sapiens (Human).